The chain runs to 719 residues: Transcription factor E4F1 (719 aa).

The interval 20 to 63 (NIITIQTTLGDEDEDIHKCGKCLAEFSALDAFIQHKLSRSCKRT) is required for ubiquitin ligase activity. A disordered region spans residues 59–125 (SCKRTQDPQT…SEDESSSPSK (67 aa)). The segment covering 98 to 109 (EKQDAKVASGDK) has biased composition (basic and acidic residues). Positions 128-207 (WKLNTEGRYV…GLAFRESGAL (80 aa)) are mediates dimerization and DNA-binding. 2 consecutive C2H2-type zinc fingers follow at residues 136 to 158 (YVCD…MFTH) and 164 to 186 (FVCE…KRRH). A C2H2-type 3; degenerate zinc finger spans residues 192 to 216 (YRCNQCGLAFRESGALTRHLKSLTP). 5 consecutive C2H2-type zinc fingers follow at residues 365–387 (YKCP…VKGH), 393–415 (FKCL…METH), 421–443 (YKCG…MRAH), 449–471 (YHCS…HRTH), and 477–499 (YVCQ…IRHH). A C2H2-type 9; degenerate zinc finger spans residues 505 to 527 (FKCSKCGRGFAEHGTLNRHLRAK).

The protein resides in the nucleus. The protein localises to the nucleoplasm. It is found in the cytoplasm. It carries out the reaction S-ubiquitinyl-[E2 ubiquitin-conjugating enzyme]-L-cysteine + [acceptor protein]-L-lysine = [E2 ubiquitin-conjugating enzyme]-L-cysteine + N(6)-ubiquitinyl-[acceptor protein]-L-lysine.. The protein operates within protein modification; protein ubiquitination. May function as a transcriptional repressor. May also function as a ubiquitin ligase. Functions in cell survival and proliferation through control of the cell cycle. This chain is Transcription factor E4F1 (e4f1), found in Danio rerio (Zebrafish).